Consider the following 832-residue polypeptide: FAST kinase domain-containing protein 1, mitochondrial (832 aa).

Residues 765–825 (VAIEFLDSKA…KDAWMDYLRK (61 aa)) form the RAP domain.

The protein belongs to the FAST kinase family.

It is found in the mitochondrion. May regulate the stability of some mitochondrial mRNA species. The protein is FAST kinase domain-containing protein 1, mitochondrial (fastkd1) of Xenopus laevis (African clawed frog).